A 231-amino-acid polypeptide reads, in one-letter code: Caspase-like protein (231 aa).

It belongs to the peptidase C14A family.

This is Caspase-like protein from Trichoplusia ni ascovirus 2c (TnAV-2c).